The primary structure comprises 379 residues: Chaperone protein DnaJ (379 aa).

The J domain maps to 5–69 (EYYERLGVDK…QKRAAYDQYG (65 aa)). The segment at 141 to 223 (GVEKQVKYNR…CHGSGHEKVA (83 aa)) adopts a CR-type zinc-finger fold. 7 residues coordinate Zn(2+): Cys-154, Cys-157, Cys-171, Cys-174, Cys-197, Cys-200, and Cys-214. CXXCXGXG motif repeat units follow at residues 154–161 (CHTCGGSG), 171–178 (CHKCGGRG), 197–204 (CDVCHGTG), and 211–218 (STTCHGSG).

This sequence belongs to the DnaJ family. Homodimer. It depends on Zn(2+) as a cofactor.

The protein localises to the cytoplasm. In terms of biological role, participates actively in the response to hyperosmotic and heat shock by preventing the aggregation of stress-denatured proteins and by disaggregating proteins, also in an autonomous, DnaK-independent fashion. Unfolded proteins bind initially to DnaJ; upon interaction with the DnaJ-bound protein, DnaK hydrolyzes its bound ATP, resulting in the formation of a stable complex. GrpE releases ADP from DnaK; ATP binding to DnaK triggers the release of the substrate protein, thus completing the reaction cycle. Several rounds of ATP-dependent interactions between DnaJ, DnaK and GrpE are required for fully efficient folding. Also involved, together with DnaK and GrpE, in the DNA replication of plasmids through activation of initiation proteins. This Lactococcus lactis subsp. cremoris (Streptococcus cremoris) protein is Chaperone protein DnaJ.